Reading from the N-terminus, the 81-residue chain is MEHRVIYVLVLVCALTLSSLAQGQQETCTVAPHHRDNCGSPGITPSQCKDKGCCFDNTVRGVPWCYYPVAVDNPPEEECPF.

Residues Met-1–Gly-23 form the signal peptide. Residues Glu-26–Val-69 enclose the P-type domain. 3 disulfides stabilise this stretch: Cys-28–Cys-54, Cys-38–Cys-53, and Cys-48–Cys-65.

The protein resides in the secreted. Stabilizer of the mucous gel overlying the gastrointestinal mucosa that provides a physical barrier against various noxious agents. The chain is Trefoil factor 1 (TFF1) from Canis lupus familiaris (Dog).